We begin with the raw amino-acid sequence, 479 residues long: 3-phytase B (479 aa).

A signal peptide spans 1 to 19; that stretch reads MPRTSLLTLACALATGASA. 5 disulfides stabilise this stretch: C71–C387, C128–C472, C216–C441, C225–C298, and C413–C421. Residue H82 is the Nucleophile of the active site. An N-linked (GlcNAc...) asparagine glycan is attached at N191. N315 carries an N-linked (GlcNAc...) asparagine glycan. D338 acts as the Proton donor in catalysis. N-linked (GlcNAc...) asparagine glycosylation is present at N458.

It belongs to the histidine acid phosphatase family. In terms of assembly, homodimer.

The enzyme catalyses 1D-myo-inositol hexakisphosphate + H2O = 1D-myo-inositol 1,2,4,5,6-pentakisphosphate + phosphate. Catalyzes the hydrolysis of inorganic orthophosphate from phytate. This chain is 3-phytase B (phyB), found in Aspergillus awamori (Black koji mold).